Reading from the N-terminus, the 264-residue chain is Small ribosomal subunit protein eS1B (264 aa).

The segment covering 1-19 (MALGKNKRISKGGKRGKRG) has biased composition (basic residues). The interval 1-23 (MALGKNKRISKGGKRGKRGKAQE) is disordered.

The protein belongs to the eukaryotic ribosomal protein eS1 family. In terms of assembly, component of the small ribosomal subunit. Mature ribosomes consist of a small (40S) and a large (60S) subunit. The 40S subunit contains about 33 different proteins and 1 molecule of RNA (18S). The 60S subunit contains about 49 different proteins and 3 molecules of RNA (25S, 5.8S and 5S).

The protein resides in the cytoplasm. The polypeptide is Small ribosomal subunit protein eS1B (Leishmania infantum).